Here is a 258-residue protein sequence, read N- to C-terminus: Imidazole glycerol phosphate synthase subunit HisF (258 aa).

Residues Asp11 and Asp130 contribute to the active site.

This sequence belongs to the HisA/HisF family. In terms of assembly, heterodimer of HisH and HisF.

Its subcellular location is the cytoplasm. It catalyses the reaction 5-[(5-phospho-1-deoxy-D-ribulos-1-ylimino)methylamino]-1-(5-phospho-beta-D-ribosyl)imidazole-4-carboxamide + L-glutamine = D-erythro-1-(imidazol-4-yl)glycerol 3-phosphate + 5-amino-1-(5-phospho-beta-D-ribosyl)imidazole-4-carboxamide + L-glutamate + H(+). The protein operates within amino-acid biosynthesis; L-histidine biosynthesis; L-histidine from 5-phospho-alpha-D-ribose 1-diphosphate: step 5/9. Its function is as follows. IGPS catalyzes the conversion of PRFAR and glutamine to IGP, AICAR and glutamate. The HisF subunit catalyzes the cyclization activity that produces IGP and AICAR from PRFAR using the ammonia provided by the HisH subunit. This chain is Imidazole glycerol phosphate synthase subunit HisF, found in Sodalis glossinidius (strain morsitans).